The primary structure comprises 98 residues: MKVGVVGDRETAIGFRLAGLTDVYEVKNDEEAVKAINELANNENIAFIIITERIAESIKDKLKNINKVIVEIPDKHGKLERIDPVKELIRKAIGVSMK.

The protein belongs to the V-ATPase F subunit family. The A-type ATPase is composed of subunits A(3), B(3), C, D, E(1 or 2), F, H(2), I and K(x).

The protein localises to the cell membrane. Component of the A-type ATP synthase that produces ATP from ADP in the presence of a proton gradient across the membrane. This is A-type ATP synthase subunit F from Methanocaldococcus jannaschii (strain ATCC 43067 / DSM 2661 / JAL-1 / JCM 10045 / NBRC 100440) (Methanococcus jannaschii).